The sequence spans 250 residues: tRNA (guanine-N(7)-)-methyltransferase (250 aa).

The S-adenosyl-L-methionine site is built by glutamate 79, glutamate 104, aspartate 131, and aspartate 154. Residue aspartate 154 is part of the active site. Residues lysine 158, aspartate 190, and 228–231 (TKFE) contribute to the substrate site.

This sequence belongs to the class I-like SAM-binding methyltransferase superfamily. TrmB family.

It carries out the reaction guanosine(46) in tRNA + S-adenosyl-L-methionine = N(7)-methylguanosine(46) in tRNA + S-adenosyl-L-homocysteine. It participates in tRNA modification; N(7)-methylguanine-tRNA biosynthesis. In terms of biological role, catalyzes the formation of N(7)-methylguanine at position 46 (m7G46) in tRNA. This chain is tRNA (guanine-N(7)-)-methyltransferase, found in Actinobacillus pleuropneumoniae serotype 5b (strain L20).